A 478-amino-acid polypeptide reads, in one-letter code: tRNA (guanine(10)-N(2))-methyltransferase TRMT11 (478 aa).

The disordered stretch occupies residues 457–478 (EERARSEMANAENVKSKGKEDV).

It belongs to the class I-like SAM-binding methyltransferase superfamily. TRM11 methyltransferase family. In terms of assembly, part of the heterodimeric TRMT11-TRM112 methyltransferase complex; this complex forms an active tRNA methyltransferase, where TRMT112 acts as an activator of the catalytic subunit TRMT11.

Its subcellular location is the cytoplasm. It catalyses the reaction guanosine(10) in tRNA + S-adenosyl-L-methionine = N(2)-methylguanosine(10) in tRNA + S-adenosyl-L-homocysteine + H(+). Catalytic subunit of the TRMT11-TRM112 methyltransferase complex, that specifically mediates the S-adenosyl-L-methionine-dependent N(2)-methylation of guanosine nucleotide at position 10 (m2G10) in tRNAs. This is one of the major tRNA (guanine-N(2))-methyltransferases. The polypeptide is tRNA (guanine(10)-N(2))-methyltransferase TRMT11 (trmt11.L) (Xenopus laevis (African clawed frog)).